The chain runs to 483 residues: Membrane-bound lytic murein transglycosylase F (483 aa).

A signal peptide spans 1–18; that stretch reads MKGLIARFIAGFALLLWA. Positions 19-267 are non-LT domain; the sequence is WDMVFPWQQL…RIEEKYFNHL (249 aa). The tract at residues 269 to 483 is LT domain; that stretch reads HFDYVDIQSY…SKESDSTLKE (215 aa). Residue Glu-312 is part of the active site. The tract at residues 458 to 483 is disordered; that stretch reads QQIQNNEEQPSVPQEISKESDSTLKE. Over residues 473-483 the composition is skewed to basic and acidic residues; the sequence is ISKESDSTLKE.

This sequence in the N-terminal section; belongs to the bacterial solute-binding protein 3 family. It in the C-terminal section; belongs to the transglycosylase Slt family.

The protein resides in the cell outer membrane. The catalysed reaction is Exolytic cleavage of the (1-&gt;4)-beta-glycosidic linkage between N-acetylmuramic acid (MurNAc) and N-acetylglucosamine (GlcNAc) residues in peptidoglycan, from either the reducing or the non-reducing ends of the peptidoglycan chains, with concomitant formation of a 1,6-anhydrobond in the MurNAc residue.. Functionally, murein-degrading enzyme that degrades murein glycan strands and insoluble, high-molecular weight murein sacculi, with the concomitant formation of a 1,6-anhydromuramoyl product. Lytic transglycosylases (LTs) play an integral role in the metabolism of the peptidoglycan (PG) sacculus. Their lytic action creates space within the PG sacculus to allow for its expansion as well as for the insertion of various structures such as secretion systems and flagella. In Actinobacillus pleuropneumoniae serotype 5b (strain L20), this protein is Membrane-bound lytic murein transglycosylase F.